The sequence spans 113 residues: MNETNKTLVGPSELPTASAVAPGPGTGARAWPVLVGFVLGAVVLSLLIALAAKCHLCRRYHASYRHRPLPETGRGGRPQVAEDEDDDGFIEDNYIQPGTGELGTEGSRDHFSL.

Positions 1–22 are disordered; sequence MNETNKTLVGPSELPTASAVAP. At 1 to 29 the chain is on the extracellular side; it reads MNETNKTLVGPSELPTASAVAPGPGTGAR. Asn5 is a glycosylation site (N-linked (GlcNAc...) asparagine). The chain crosses the membrane as a helical; Signal-anchor for type III membrane protein span at residues 30-50; sequence AWPVLVGFVLGAVVLSLLIAL. Topologically, residues 51 to 113 are cytoplasmic; it reads AAKCHLCRRY…TEGSRDHFSL (63 aa). The disordered stretch occupies residues 66 to 113; that stretch reads HRPLPETGRGGRPQVAEDEDDDGFIEDNYIQPGTGELGTEGSRDHFSL. A compositionally biased stretch (acidic residues) spans 81–90; it reads AEDEDDDGFI.

It is found in the membrane. The protein resides in the early endosome. It localises to the recycling endosome. Its subcellular location is the cell membrane. Functionally, may be involved in membrane trafficking between endosomes and plasma membrane. This is Type III endosome membrane protein TEMP (C1orf210) from Homo sapiens (Human).